The chain runs to 457 residues: Nuclear hormone receptor family member odr-7 (457 aa).

2 disordered regions span residues Glu-57–Ala-95 and Lys-230–Pro-252. Residues Leu-327 to His-407 constitute a DNA-binding region (nuclear receptor). 2 NR C4-type zinc fingers span residues Cys-330–Cys-351 and Cys-367–Cys-395. Positions Gln-435–Asn-457 are disordered.

The protein belongs to the nuclear hormone receptor family. NR0 subfamily. As to quaternary structure, heterodimer with a partner that confers DNA binding capacity or a nuclear hormone receptor whose DNA binding it inhibits. Expressed predominantly in the AWA neurons.

The protein resides in the nucleus. The protein localises to the cytoplasm. It is found in the perinuclear region. Functionally, required for the function of one pair of chemosensory neurons called AWA neurons that are involved in chemotaxis to volatile odorants. Acts in a pathway that specifies olfactory neuronal fate. Regulates the transcription of olfactory signaling molecules such as odr-10 that specify AWA neuron identity and function. Represses the expression in AWA neurons of factors such as str-2 which specify AWC neuron identity. The polypeptide is Nuclear hormone receptor family member odr-7 (odr-7) (Caenorhabditis elegans).